The chain runs to 387 residues: 1,3-propanediol dehydrogenase (387 aa).

It belongs to the iron-containing alcohol dehydrogenase family. In terms of assembly, homooctamer. Fe cation is required as a cofactor.

The catalysed reaction is propane-1,3-diol + NAD(+) = 3-hydroxypropanal + NADH + H(+). In Klebsiella pneumoniae, this protein is 1,3-propanediol dehydrogenase (dhaT).